We begin with the raw amino-acid sequence, 290 residues long: uncharacterized protein (290 aa).

Its subcellular location is the cell membrane. It localises to the membrane raft. This is an uncharacterized protein from Bacillus subtilis (strain 168).